The sequence spans 194 residues: Lachesicidin (194 aa).

Residues 1-22 form the signal peptide; that stretch reads MQGFFWKTWLVLAVCGTPASLA. A propeptide spanning residues 23-160 is cleaved from the precursor; that stretch reads HRPLSYGEAL…DEEKDQPKRV (138 aa). 2 cysteine pairs are disulfide-bonded: cysteine 79–cysteine 90 and cysteine 101–cysteine 118. Residues 125-154 show a composition bias toward acidic residues; the sequence is EEEEEEEEEEQKAEAENDEEVEKEKEDEEK. Residues 125–157 form a disordered region; that stretch reads EEEEEEEEEEQKAEAENDEEVEKEKEDEEKDQP.

This sequence belongs to the cathelicidin family. Expressed by the venom gland.

It localises to the secreted. Its subcellular location is the target cell membrane. Functionally, potent antimicrobial peptide against Gram-negative and Gram-positive bacteria. Adopts an amphipathic alpha helical conformation, that may allow to partition into the target membrane. Low hemolytic activities have been observed on mammalian cells. This is Lachesicidin from Lachesis muta rhombeata (Bushmaster).